Here is a 391-residue protein sequence, read N- to C-terminus: uncharacterized protein (391 aa).

This is an uncharacterized protein from Sinorhizobium fredii (strain NBRC 101917 / NGR234).